The following is a 544-amino-acid chain: 4-coumarate--CoA ligase 2 (544 aa).

ATP is bound by residues Ser-190, Ser-191, Gly-192, Thr-193, Thr-194, and Lys-198. Residue Tyr-240 participates in (E)-4-coumaroyl-AMP binding. Lys-261 contacts CoA. The interval 263-332 (DIVPFLELIQ…AKFPNAKLGQ (70 aa)) is SBD1. (E)-4-coumaroyl-AMP-binding residues include Ala-310, Gln-332, Gly-333, Thr-337, and Met-345. Residues Gln-332, Gly-333, and Thr-337 each coordinate ATP. Positions 333–400 (GYGMTEAGPV…IRGDQIMKGY (68 aa)) are SBD2. Positions 421 and 436 each coordinate ATP. Residues Lys-438 and Lys-442 each coordinate (E)-4-coumaroyl-AMP. CoA is bound by residues Lys-444 and Gly-445. An ATP-binding site is contributed by Lys-527.

It belongs to the ATP-dependent AMP-binding enzyme family. It depends on Mg(2+) as a cofactor.

The catalysed reaction is (E)-4-coumarate + ATP + CoA = (E)-4-coumaroyl-CoA + AMP + diphosphate. It catalyses the reaction (E)-4-coumarate + ATP + H(+) = (E)-4-coumaroyl-AMP + diphosphate. The enzyme catalyses (E)-4-coumaroyl-AMP + CoA = (E)-4-coumaroyl-CoA + AMP + H(+). It participates in phytoalexin biosynthesis; 3,4',5-trihydroxystilbene biosynthesis; 3,4',5-trihydroxystilbene from trans-4-coumarate: step 1/2. Functionally, carboxylate--CoA ligase that may use 4-coumarate as substrate. Follows a two-step reaction mechanism, wherein the carboxylate substrate first undergoes adenylation by ATP, followed by a thioesterification in the presence of CoA to yield the final CoA thioester. This is 4-coumarate--CoA ligase 2 (4CL2) from Petroselinum crispum (Parsley).